Here is a 65-residue protein sequence, read N- to C-terminus: Large ribosomal subunit protein bL35 (65 aa).

The interval 1-51 (MPKMKTNRAAAKRFKKTANGGLKSANAYTSHRFHGKTKKQRRQLRGTDMMD) is disordered. Residues 31 to 44 (HRFHGKTKKQRRQL) are compositionally biased toward basic residues.

This sequence belongs to the bacterial ribosomal protein bL35 family.

This is Large ribosomal subunit protein bL35 from Pediococcus pentosaceus (strain ATCC 25745 / CCUG 21536 / LMG 10740 / 183-1w).